The primary structure comprises 335 residues: Probable deoxyhypusine synthase (335 aa).

Lysine 308 acts as the Nucleophile in catalysis.

It belongs to the deoxyhypusine synthase family. Requires NAD(+) as cofactor.

It carries out the reaction [eIF5A protein]-L-lysine + spermidine = [eIF5A protein]-deoxyhypusine + propane-1,3-diamine. Its pathway is protein modification; eIF5A hypusination. Its function is as follows. Catalyzes the NAD-dependent oxidative cleavage of spermidine and the subsequent transfer of the butylamine moiety of spermidine to the epsilon-amino group of a specific lysine residue of the eIF-5A precursor protein to form the intermediate deoxyhypusine residue. This Thermococcus onnurineus (strain NA1) protein is Probable deoxyhypusine synthase.